Consider the following 614-residue polypeptide: MNKIHLLDEKTINKISAGEVVERPASIVKELIENSIDAGSKNITVEILEGGIPYIKVSDDGCGMNEIDAILAFERHATSKIKSDNDLYSIGTLGFRGEALASIAAVSHVTLQTKEEGALFGTKVVVEGGKVVEKTTCGCAKGCSIEVRDVFFNTPARRKFLKRPSTESMYIIDVVTKLCLSHPEVSFKYVKDRKLQFITSGNGNIEDVILRLFGNEVYSSLMSASFESEDLKLKILAGKNSLNYSNRNMQFFYVNGRYVKNKTLSAAVDEAFKTYIPVNRYPAVFLYMEIDPRQIDVNIHPSKLEIKFSDERRIFEAVYKTIKDSLHKYNLIPEVKIEEKKNIFEIETPTISAEQTKLYLTSSDKELEEEKKKFDNEFKGKNVFLKDNVLKENSKNSSLDNHLAVYEEYEHEKEEINKNDLAKKISDIRIVGTLFSTYIIVEKEDVFYIIDQHAAHERILYEKFTSQYEKIQTRQVTFPIVVELQPRDLELVHQEKELLNKLGYVFEEFGNNCIILREVPVILGQPEARQLFIDIVEKLKDKELINKISLKEENIIMMACKAAVKAMDNLSEKEIHKLFDDLKITENPYTCPHGRPVIIAITKTQLEKMFKRIM.

This sequence belongs to the DNA mismatch repair MutL/HexB family.

Its function is as follows. This protein is involved in the repair of mismatches in DNA. It is required for dam-dependent methyl-directed DNA mismatch repair. May act as a 'molecular matchmaker', a protein that promotes the formation of a stable complex between two or more DNA-binding proteins in an ATP-dependent manner without itself being part of a final effector complex. This Thermoanaerobacter sp. (strain X514) protein is DNA mismatch repair protein MutL.